We begin with the raw amino-acid sequence, 888 residues long: Villin-like protein quail (888 aa).

The Gelsolin-like repeat unit spans residues 307 to 366; that stretch reads GVYLLDNYGQSIWLWVGGQAPQADALSAMGNGRAFVKKKKYPDNTLVVRVLEGHEPVEFK. Residues 823 to 888 form the HP domain; the sequence is FDGHKKYPLT…MELKKQFKLF (66 aa).

It belongs to the villin/gelsolin family. Germline specific in adult flies.

In terms of biological role, required for the formation of cytoplasmic actin filament bundles in nurse cells, possibly by regulating both the polymerization and organization of actin filaments. Mutations in quail result in female sterility due to the disruption of cytoplasmic transport from the nurse cells into the oocyte late in oogenesis. This chain is Villin-like protein quail (qua), found in Drosophila melanogaster (Fruit fly).